Reading from the N-terminus, the 174-residue chain is Large ribosomal subunit protein uL10 (174 aa).

It belongs to the universal ribosomal protein uL10 family. Part of the ribosomal stalk of the 50S ribosomal subunit. The N-terminus interacts with L11 and the large rRNA to form the base of the stalk. The C-terminus forms an elongated spine to which L12 dimers bind in a sequential fashion forming a multimeric L10(L12)X complex.

Functionally, forms part of the ribosomal stalk, playing a central role in the interaction of the ribosome with GTP-bound translation factors. In Anaeromyxobacter sp. (strain K), this protein is Large ribosomal subunit protein uL10.